The following is a 588-amino-acid chain: Probable G-protein coupled receptor 162 (588 aa).

The Extracellular portion of the chain corresponds to 1-17; it reads MARGGLGAEEASLRSNA. A helical transmembrane segment spans residues 18 to 38; the sequence is LSWLACGLLALLANAWIILSI. The Cytoplasmic segment spans residues 39 to 49; the sequence is SAKQQKHKPLE. The helical transmembrane segment at 50–70 threads the bilayer; the sequence is LLLCFLAGTHILMAAVPLTTF. Over 71-91 the chain is Extracellular; it reads AVVQLRRQASSDYDWNESICK. N-linked (GlcNAc...) asparagine glycosylation occurs at Asn86. Residues 92–112 form a helical membrane-spanning segment; the sequence is VFVSTYYTLALATCFTVASLS. At 113–133 the chain is on the cytoplasmic side; it reads YHRMWMVRWPVNYRLSNAKKQ. A helical membrane pass occupies residues 134 to 154; sequence ALHAVMGIWMVSFILSTLPSI. The Extracellular portion of the chain corresponds to 155 to 174; sequence GWHNNGERYYARGCQFIVSK. A helical transmembrane segment spans residues 175-195; sequence IGLGFGVCFSLLLLGGIVMGL. Topologically, residues 196-275 are cytoplasmic; the sequence is VCVAITFYQT…SLQVTNLVSA (80 aa). The helical transmembrane segment at 276–296 threads the bilayer; the sequence is IVFLYDSLTGVPILVVSFFSL. Over 297 to 303 the chain is Extracellular; sequence KSDSAPP. The helical transmembrane segment at 304-324 threads the bilayer; the sequence is WMVLAVLWCSMAQTLLLPSFI. Topologically, residues 325-588 are cytoplasmic; it reads WSCERYRADV…GNPIFPQLTL (264 aa). Residues Ser413 and Ser435 each carry the phosphoserine modification. 2 disordered regions span residues 511–545 and 561–588; these read ETPLPSPTASPGPSPRRPRPLGFSPRRLSLGSPDS and SLTGSEGSSRAWGRPWGPGNPIFPQLTL. The span at 514–525 shows a compositional bias: pro residues; the sequence is LPSPTASPGPSP. Residues 530–540 show a composition bias toward low complexity; that stretch reads PLGFSPRRLSL.

The protein belongs to the G-protein coupled receptor 1 family.

It localises to the cell membrane. Its function is as follows. Orphan receptor. This chain is Probable G-protein coupled receptor 162 (Gpr162), found in Mus musculus (Mouse).